Reading from the N-terminus, the 612-residue chain is uncharacterized protein (612 aa).

This is an uncharacterized protein from Rickettsia prowazekii (strain Madrid E).